The primary structure comprises 209 residues: Large ribosomal subunit protein uL3 (209 aa).

The disordered stretch occupies residues 122 to 151 (AIKRHGQSRGPMSHGSRYHRRPGSMGPVDP).

Belongs to the universal ribosomal protein uL3 family. As to quaternary structure, part of the 50S ribosomal subunit. Forms a cluster with proteins L14 and L19.

One of the primary rRNA binding proteins, it binds directly near the 3'-end of the 23S rRNA, where it nucleates assembly of the 50S subunit. The protein is Large ribosomal subunit protein uL3 of Bacillus velezensis (strain DSM 23117 / BGSC 10A6 / LMG 26770 / FZB42) (Bacillus amyloliquefaciens subsp. plantarum).